The primary structure comprises 275 residues: Large ribosomal subunit protein uL2 (275 aa).

2 disordered regions span residues 38 to 59 and 222 to 275; these read KKHA…GGHK and GSAM…RKQK. 2 stretches are compositionally biased toward basic residues: residues 39–59 and 254–275; these read KHAG…GGHK and MGKK…RKQK.

Belongs to the universal ribosomal protein uL2 family. As to quaternary structure, part of the 50S ribosomal subunit. Forms a bridge to the 30S subunit in the 70S ribosome.

In terms of biological role, one of the primary rRNA binding proteins. Required for association of the 30S and 50S subunits to form the 70S ribosome, for tRNA binding and peptide bond formation. It has been suggested to have peptidyltransferase activity; this is somewhat controversial. Makes several contacts with the 16S rRNA in the 70S ribosome. The sequence is that of Large ribosomal subunit protein uL2 from Herpetosiphon aurantiacus (strain ATCC 23779 / DSM 785 / 114-95).